Reading from the N-terminus, the 266-residue chain is Indole-3-glycerol phosphate synthase (266 aa).

Belongs to the TrpC family.

The enzyme catalyses 1-(2-carboxyphenylamino)-1-deoxy-D-ribulose 5-phosphate + H(+) = (1S,2R)-1-C-(indol-3-yl)glycerol 3-phosphate + CO2 + H2O. The protein operates within amino-acid biosynthesis; L-tryptophan biosynthesis; L-tryptophan from chorismate: step 4/5. This Opitutus terrae (strain DSM 11246 / JCM 15787 / PB90-1) protein is Indole-3-glycerol phosphate synthase.